The following is a 303-amino-acid chain: Phytochrome-associated serine/threonine-protein phosphatase (303 aa).

Zn(2+) contacts are provided by D50, H52, D78, and N110. The active-site Proton donor is H111. The Zn(2+) site is built by H160 and H234.

This sequence belongs to the PPP phosphatase family. PP-6 (PP-V) subfamily. As to quaternary structure, interacts with PHYA and PHYB, mostly when they are phosphorylated and in Pfr forms. Zn(2+) serves as cofactor. In terms of tissue distribution, mostly expressed in flowers and stems.

The protein resides in the cytoplasm. It carries out the reaction O-phospho-L-seryl-[protein] + H2O = L-seryl-[protein] + phosphate. It catalyses the reaction O-phospho-L-threonyl-[protein] + H2O = L-threonyl-[protein] + phosphate. In terms of biological role, catalytic subunit of protein phosphatase 6 (PP6). Dephosphorylates phosphorylated phytochromes, with a preference toward Pfr forms. Plays a major role in the photoperiodic control of flowering time in long days by modulating phytochrome signals in flowering time control. The polypeptide is Phytochrome-associated serine/threonine-protein phosphatase (Pisum sativum (Garden pea)).